A 918-amino-acid chain; its full sequence is Whirlin (918 aa).

One can recognise a PDZ 1 domain in the interval 141–224; it reads LVSLRRAKAH…LVLSVYSAGR (84 aa). The disordered stretch occupies residues 240-266; it reads PQGRSTSPPSSLPQPHGSTLRQREDDR. Positions 280 to 362 constitute a PDZ 2 domain; sequence KVNLVLGDGR…LILTVKDVGR (83 aa). Disordered regions lie at residues 387 to 407, 503 to 538, and 560 to 824; these read NSAG…GFYK, SMKA…TSTT, and EGTG…LEPT. Low complexity predominate over residues 522–538; the sequence is SYSDTGSSTGSHGTSTT. Over residues 563-572 the composition is skewed to polar residues; sequence GETTQGSTNA. Composition is skewed to pro residues over residues 591-600 and 638-649; these read IKPPPPPPPL and RSPPPGTAPTPG. A compositionally biased stretch (polar residues) spans 654-672; it reads QDSPSSPIYASISHANPSS. The residue at position 696 (serine 696) is a Phosphoserine. Polar residues-rich tracts occupy residues 754-773 and 783-798; these read QTRT…TLSE and EAST…SAKN. A compositionally biased stretch (basic and acidic residues) spans 800 to 811; it reads NGKEQPRTERTA. Residues 827 to 910 form the PDZ 3 domain; it reads LVRVRKSAAT…TKERDYIDFL (84 aa).

As to quaternary structure, forms homooligomers. Interacts (via C-terminal PDZ domain) with MYO15A; this interaction is necessary for localization of WHRN to stereocilia tips. Interacts (via C-terminal PDZ domain) with MPP1/p55. Interacts with LRRC4C/NGL1. Interacts with MYO7A. Interacts with RPGR. Interacts with EPS8. Interacts with CASK. Interacts with CIB2. Component of USH2 complex, composed of ADGRV1, PDZD7, USH2A and WHRN. Interacts (via PDZ domains) with PDZD7; the interaction is direct. Interacts (via N-terminal PDZ domain) with USH2A (via cytoplasmic region). Interacts with ADGRV1/MASS1 (via cytoplasmic region). Expressed in the retina. Colocalizes with RPGR in the photoreceptor connecting cilium, a thin bridge linking the cell body and the light-sensing outer segment (at protein level). Detected in the inner ear throughout development from embryonic day 12 to 20 days after birth. Displays a dynamic pattern of expression after birth, demonstrating an ordered appearance and fade-out across stereocilia rows. Isoforms 5, 6, 7 and 8 are not detected in the retina.

It is found in the cytoplasm. The protein localises to the cell projection. The protein resides in the stereocilium. Its subcellular location is the growth cone. It localises to the photoreceptor inner segment. It is found in the synapse. In terms of biological role, involved in hearing and vision as member of the USH2 complex. Necessary for elongation and maintenance of inner and outer hair cell stereocilia in the organ of Corti in the inner ear. Involved in the maintenance of the hair bundle ankle region, which connects stereocilia in cochlear hair cells of the inner ear. In retina photoreceptors, required for the maintenance of periciliary membrane complex that seems to play a role in regulating intracellular protein transport. The chain is Whirlin from Mus musculus (Mouse).